Reading from the N-terminus, the 424-residue chain is Histidine--tRNA ligase (424 aa).

The protein belongs to the class-II aminoacyl-tRNA synthetase family. In terms of assembly, homodimer.

It is found in the cytoplasm. The catalysed reaction is tRNA(His) + L-histidine + ATP = L-histidyl-tRNA(His) + AMP + diphosphate + H(+). This is Histidine--tRNA ligase from Klebsiella pneumoniae (strain 342).